Consider the following 202-residue polypeptide: ATP-dependent Clp protease proteolytic subunit (202 aa).

Residue Ser101 is the Nucleophile of the active site. Residue His126 is part of the active site.

It belongs to the peptidase S14 family. In terms of assembly, component of the chloroplastic Clp protease core complex.

The protein resides in the plastid. It localises to the chloroplast stroma. It catalyses the reaction Hydrolysis of proteins to small peptides in the presence of ATP and magnesium. alpha-casein is the usual test substrate. In the absence of ATP, only oligopeptides shorter than five residues are hydrolyzed (such as succinyl-Leu-Tyr-|-NHMec, and Leu-Tyr-Leu-|-Tyr-Trp, in which cleavage of the -Tyr-|-Leu- and -Tyr-|-Trp bonds also occurs).. In terms of biological role, cleaves peptides in various proteins in a process that requires ATP hydrolysis. Has a chymotrypsin-like activity. Plays a major role in the degradation of misfolded proteins. The sequence is that of ATP-dependent Clp protease proteolytic subunit from Illicium oligandrum (Star anise).